An 83-amino-acid chain; its full sequence is Large ribosomal subunit protein bL27 (83 aa).

A disordered region spans residues 1–22 (MAHKKGQGSTRNGRDSHSKRLG).

The protein belongs to the bacterial ribosomal protein bL27 family.

In Protochlamydia amoebophila (strain UWE25), this protein is Large ribosomal subunit protein bL27.